A 104-amino-acid polypeptide reads, in one-letter code: uncharacterized protein (104 aa).

Residues 81–97 (CLLMLPCISVVMSISSV) form a helical membrane-spanning segment.

The protein localises to the cell membrane. This is an uncharacterized protein from Bacillus subtilis (strain 168).